Consider the following 331-residue polypeptide: Biotin synthase (331 aa).

Residues serine 39–alanine 264 form the Radical SAM core domain. Residues cysteine 54, cysteine 58, and cysteine 61 each coordinate [4Fe-4S] cluster. The [2Fe-2S] cluster site is built by cysteine 98, cysteine 130, cysteine 190, and arginine 262.

This sequence belongs to the radical SAM superfamily. Biotin synthase family. Homodimer. [4Fe-4S] cluster is required as a cofactor. The cofactor is [2Fe-2S] cluster.

The enzyme catalyses (4R,5S)-dethiobiotin + (sulfur carrier)-SH + 2 reduced [2Fe-2S]-[ferredoxin] + 2 S-adenosyl-L-methionine = (sulfur carrier)-H + biotin + 2 5'-deoxyadenosine + 2 L-methionine + 2 oxidized [2Fe-2S]-[ferredoxin]. It participates in cofactor biosynthesis; biotin biosynthesis; biotin from 7,8-diaminononanoate: step 2/2. Functionally, catalyzes the conversion of dethiobiotin (DTB) to biotin by the insertion of a sulfur atom into dethiobiotin via a radical-based mechanism. The chain is Biotin synthase from Chlamydia pneumoniae (Chlamydophila pneumoniae).